A 284-amino-acid polypeptide reads, in one-letter code: Elongation factor Ts (284 aa).

An involved in Mg(2+) ion dislocation from EF-Tu region spans residues 80–83 (TDFV).

The protein belongs to the EF-Ts family.

It localises to the cytoplasm. Associates with the EF-Tu.GDP complex and induces the exchange of GDP to GTP. It remains bound to the aminoacyl-tRNA.EF-Tu.GTP complex up to the GTP hydrolysis stage on the ribosome. This chain is Elongation factor Ts, found in Photobacterium profundum (strain SS9).